A 990-amino-acid chain; its full sequence is Fibronectin-binding protein A (990 aa).

An N-terminal signal peptide occupies residues 1–35 (MKNNLRYGIRKHKLGAASVFLGTMIVVGMGQDKEA). Residues 7–18 (YGIRKHKLGAAS) carry the YSIRK-G/S signaling motif motif. Disordered regions lie at residues 33-61 (KEAA…SETQ) and 96-193 (PKAV…TEVK). Over residues 37-55 (TSEQKTTTVEENGNSATDN) the composition is skewed to polar residues. The segment at 37–511 (TSEQKTTTVE…SNKADGNGKN (475 aa)) is ligand-binding A region. Composition is skewed to basic and acidic residues over residues 112–126 (TVKE…KPQV) and 179–193 (DVAE…TEVK). Positions 194–511 (GTDVTSKVTV…SNKADGNGKN (318 aa)) are fibrinogen/elastin/tropoelastin-binding. Positions 512–834 (GQIIQNNDFE…EGQQTIEEDT (323 aa)) are fibronectin-binding. The stretch at 545–574 (ENQDNTPLDIDYHTAIDGEGGYADGYIETI) is one B-1 repeat. The segment at 545 to 604 (ENQDNTPLDIDYHTAIDGEGGYADGYIETIEETDSSAIDIDYHTAVDSEAGHVGGYTESS) is 2 X approximate tandem repeats. The B-2 repeat unit spans residues 575–604 (EETDSSAIDIDYHTAVDSEAGHVGGYTESS). The tract at residues 702 to 969 (LGYEGGQNSG…EESTNKGMLF (268 aa)) is disordered. One copy of the D-1 repeat lies at 707-744 (GQNSGNQSFEEDTEEDKPKYEQGGNIVDIDFDSVPQIQ). Residues 707-850 (GQNSGNQSFE…TPEVPSEPET (144 aa)) are 4 X approximate tandem repeats. Positions 741 to 752 (PQIQGQNNGNQS) are enriched in polar residues. A D-2 repeat occupies 745–782 (GQNNGNQSFEEDTEKDKPKYEQGGNIIDIDFDSVPQIH). One copy of the D-3 repeat lies at 783–821 (GFNKHNEIIEEDTNKDKPNYQFGGHNSVDFEEDTLPKVS). The span at 786–800 (KHNEIIEEDTNKDKP) shows a compositional bias: basic and acidic residues. One copy of the D-4; truncated repeat lies at 822–850 (GQNEGQQTIEEDTTPPTPPTPEVPSEPET). Pro residues predominate over residues 836 to 910 (PPTPPTPEVP…PAEPGKPVPP (75 aa)). WR repeat units lie at residues 851 to 864 (PTPP…EPET), 865 to 878 (PTPP…EPET), 879 to 892 (PTPP…EPET), 893 to 906 (PTPP…EPGK), and 907 to 920 (PVPP…KPSK). The interval 851 to 920 (PTPPTPEVPS…AEEEPKKPSK (70 aa)) is 5 X tandem repeats, Pro-rich (WR). Residues 954-958 (LPETG) carry the LPXTG sorting signal motif. Thr-957 is modified (pentaglycyl murein peptidoglycan amidated threonine). Residues 958–990 (GGEESTNKGMLFGGLFSILGLALLRRNKKNHKA) constitute a propeptide, removed by sortase.

The protein localises to the secreted. The protein resides in the cell wall. Functionally, promotes bacterial attachment to multiple substrates, such as fibronectin (Fn), fibrinogen (Fg), elastin peptides and tropoelastin. This confers to S.aureus the ability to invade endothelial cells. Promotes adherence to and aggregation of activated platelets. The polypeptide is Fibronectin-binding protein A (fnbA) (Staphylococcus aureus (strain bovine RF122 / ET3-1)).